The sequence spans 161 residues: ATP synthase subunit b (161 aa).

The helical transmembrane segment at 11–31 (AISFVLFVWFCMKYIWPPIIL) threads the bilayer.

The protein belongs to the ATPase B chain family. In terms of assembly, F-type ATPases have 2 components, F(1) - the catalytic core - and F(0) - the membrane proton channel. F(1) has five subunits: alpha(3), beta(3), gamma(1), delta(1), epsilon(1). F(0) has three main subunits: a(1), b(2) and c(10-14). The alpha and beta chains form an alternating ring which encloses part of the gamma chain. F(1) is attached to F(0) by a central stalk formed by the gamma and epsilon chains, while a peripheral stalk is formed by the delta and b chains.

The protein resides in the cell membrane. F(1)F(0) ATP synthase produces ATP from ADP in the presence of a proton or sodium gradient. F-type ATPases consist of two structural domains, F(1) containing the extramembraneous catalytic core and F(0) containing the membrane proton channel, linked together by a central stalk and a peripheral stalk. During catalysis, ATP synthesis in the catalytic domain of F(1) is coupled via a rotary mechanism of the central stalk subunits to proton translocation. Its function is as follows. Component of the F(0) channel, it forms part of the peripheral stalk, linking F(1) to F(0). The protein is ATP synthase subunit b of Buchnera aphidicola subsp. Acyrthosiphon pisum (strain APS) (Acyrthosiphon pisum symbiotic bacterium).